Here is a 77-residue protein sequence, read N- to C-terminus: EMBRYO SURROUNDING FACTOR 1-like protein 6 (77 aa).

Residues 1–25 form the signal peptide; sequence MSPSHFAILFIIVISLVPLHGYANG. Cystine bridges form between cysteine 38-cysteine 53, cysteine 43-cysteine 72, cysteine 51-cysteine 68, and cysteine 54-cysteine 61.

This sequence belongs to the MEG family.

The polypeptide is EMBRYO SURROUNDING FACTOR 1-like protein 6 (ESFL6) (Arabidopsis thaliana (Mouse-ear cress)).